A 1279-amino-acid chain; its full sequence is MTLTERLREKISRAFYNHGLLCASYPIPIILFTGFCILACCYPLLKLPLPGTGPVEFTTPVKDYSPPPVDSDRKQGEPTEQPEWYVGAPVAYVQQIFVKSSVFPWHKNLLAVDVFRSPLSRAFQLVEEIRNHVLRDSSGIRSLEELCLQVTDLLPGLRKLRNLLPEHGCLLLSPGNFWQNDWERFHADPDIIGTIHQHEPKTLQTSATLKDLLFGVPGKYSGVSLYTRKRMVSYTITLVFQHYHAKFLGSLRARLMLLHPSPNCSLRAESLVHVHFKEEIGVAELIPLVTTYIILFAYIYFSTRKIDMVKSKWGLALAAVVTVLSSLLMSVGLCTLFGLTPTLNGGEIFPYLVVVIGLENVLVLTKSVVSTPVDLEVKLRIAQGLSSESWSIMKNMATELGIILIGYFTLVPAIQEFCLFAVVGLVSDFFLQMLFFTTVLSIDIRRMELADLNKRLPPEACLPSAKPVGQPTRYERQLAVRPSTPHTITLQPSSFRNLRLPKRLRVVYFLARTRLAQRLIMAGTVVWIGILVYTDPAGLRNYLAAQVTEQSPLGEGALAPMPVPSGMLPPSHPDPAFSIFPPDAPKLPENQTSPGESPERGGPAEVVHDSPVPEVTWGPEDEELWRKLSFRHWPTLFSYYNITLAKRYISLLPVIPVTLRLNPREALEGRHPQDGRSAWPPPGPIPAGHWEAGPKGPGGVQAHGDVTLYKVAALGLATGIVLVLLLLCLYRVLCPRNYGQLGGGPGRRRRGELPCDDYGYAPPETEIVPLVLRGHLMDIECLASDGMLLVSCCLAGHVCVWDAQTGDCLTRIPRPGRQRRDSGVGSGLEAQESWERLSDGGKAGPEEPGDSPPLRHRPRGPPPPSLFGDQPDLTCLIDTNFSAQPRSSQPTQPEPRHRAVCGRSRDSPGYDFSCLVQRVYQEEGLAAVCTPALRPPSPGPVLSQAPEDEGGSPEKGSPSLAWAPSAEGSIWSLELQGNLIVVGRSSGRLEVWDAIEGVLCCSSEEVSSGITALVFLDKRIVAARLNGSLDFFSLETHTALSPLQFRGTPGRGSSPASPVYSSSDTVACHLTHTVPCAHQKPITALKAAAGRLVTGSQDHTLRVFRLEDSCCLFTLQGHSGAITTVYIDQTMVLASGGQDGAICLWDVLTGSRVSHVFAHRGDVTSLTCTTSCVISSGLDDLISIWDRSTGIKFYSIQQDLGCGASLGVISDNLLVTGGQGCVSFWDLNYGDLLQTVYLGKNSEAQPARQILVLDNAAIVCNFGSELSLVYVPSVLEKLD.

Over 1–18 (MTLTERLREKISRAFYNH) the chain is Cytoplasmic. Residues 19-39 (GLLCASYPIPIILFTGFCILA) traverse the membrane as a helical segment. Over 40-279 (CCYPLLKLPL…SLVHVHFKEE (240 aa)) the chain is Lumenal. Residues 46–284 (KLPLPGTGPV…HFKEEIGVAE (239 aa)) form a loop-1 region. A disordered region spans residues 60-80 (PVKDYSPPPVDSDRKQGEPTE). Asparagine 263 is a glycosylation site (N-linked (GlcNAc...) asparagine). A helical membrane pass occupies residues 280–300 (IGVAELIPLVTTYIILFAYIY). Residues 284–442 (ELIPLVTTYI…MLFFTTVLSI (159 aa)) enclose the SSD domain. Over 301 to 312 (FSTRKIDMVKSK) the chain is Cytoplasmic. The helical transmembrane segment at 313-333 (WGLALAAVVTVLSSLLMSVGL) threads the bilayer. The Lumenal segment spans residues 334–344 (CTLFGLTPTLN). A helical membrane pass occupies residues 345–365 (GGEIFPYLVVVIGLENVLVLT). Over 366-401 (KSVVSTPVDLEVKLRIAQGLSSESWSIMKNMATELG) the chain is Cytoplasmic. A helical transmembrane segment spans residues 402–422 (IILIGYFTLVPAIQEFCLFAV). Position 423 (valine 423) is a topological domain, lumenal. A helical membrane pass occupies residues 424–444 (GLVSDFFLQMLFFTTVLSIDI). The Cytoplasmic segment spans residues 445 to 518 (RRMELADLNK…FLARTRLAQR (74 aa)). Residues 447-452 (MELADL) carry the ER export signal motif. Glycyl lysine isopeptide (Lys-Gly) (interchain with G-Cter in ubiquitin) cross-links involve residues lysine 454 and lysine 466. Residues 519-539 (LIMAGTVVWIGILVYTDPAGL) form a helical membrane-spanning segment. The loop-7 stretch occupies residues 535 to 710 (DPAGLRNYLA…QAHGDVTLYK (176 aa)). Over 540–709 (RNYLAAQVTE…VQAHGDVTLY (170 aa)) the chain is Lumenal. The segment at 579 to 615 (IFPPDAPKLPENQTSPGESPERGGPAEVVHDSPVPEV) is disordered. 2 N-linked (GlcNAc...) asparagine glycosylation sites follow: asparagine 590 and asparagine 641. The interval 668-696 (EGRHPQDGRSAWPPPGPIPAGHWEAGPKG) is disordered. Residues 710–730 (KVAALGLATGIVLVLLLLCLY) traverse the membrane as a helical segment. Residues 731-1279 (RVLCPRNYGQ…YVPSVLEKLD (549 aa)) are Cytoplasmic-facing. Positions 731–1279 (RVLCPRNYGQ…YVPSVLEKLD (549 aa)) are interaction with SREBF2. The stretch at 771-811 (VLRGHLMDIECLASDGMLLVSCCLAGHVCVWDAQTGDCLTR) is one WD 1 repeat. Residues 811–904 (RIPRPGRQRR…PRHRAVCGRS (94 aa)) form a disordered region. Phosphoserine occurs at positions 822, 838, and 851. Positions 877–891 (IDTNFSAQPRSSQPT) are enriched in polar residues. Phosphoserine is present on residues serine 907 and serine 937. The disordered stretch occupies residues 931–962 (PALRPPSPGPVLSQAPEDEGGSPEKGSPSLAW). 2 WD repeats span residues 952–1002 (SPEK…LCCS) and 1005–1042 (EVSS…ALSP). Position 1051 is an omega-N-methylarginine (arginine 1051). WD repeat units follow at residues 1077-1114 (AHQK…CLFT), 1117-1155 (GHSG…RVSH), 1158-1195 (AHRG…KFYS), and 1197-1235 (QQDL…LLQT).

Belongs to the WD repeat SCAP family. In terms of assembly, membrane region forms a homotetramer. Component of the SCAP-SREBP complex (composed of SCAP and SREBF1/SREBP1 or SREBF2/SREBP2); interacts with SREBF1/SREBP1 or SREBF2/SREBP2 through its C-terminal cytoplasmic domain. Forms a ternary complex with INSIG1 or INSIG2 through its transmembrane domains at high sterol concentrations. Interacts with PAQR3; the interaction anchors the SCAP-SREBP complex to the Golgi apparatus in low cholesterol conditions. Interacts with the SEC23-SEC24 complex in a SAR1-GTP-dependent manner through an ER export signal in its third cytoplasmic loop. Interacts with RNF139; the interaction inhibits the interaction of SCAP with SEC24B and hampering the ER to Golgi transport of the SCAP-SREBP complex. Interacts with SPRING1. Post-translationally, ubiquitinated at Lys-454 and Lys-466. RNF145 triggers ubiquitination of SCAP, likely inhibiting SCAP-SREBP complex transport to the Golgi apparatus and the subsequent processing/maturation of SREBF2/SREBP2.

The protein localises to the endoplasmic reticulum membrane. It is found in the golgi apparatus membrane. It localises to the cytoplasmic vesicle. The protein resides in the COPII-coated vesicle membrane. In terms of biological role, escort protein required for cholesterol as well as lipid homeostasis. Regulates export of the SCAP-SREBP complex from the endoplasmic reticulum to the Golgi upon low cholesterol, thereby regulating the processing of sterol regulatory element-binding proteins (SREBPs) SREBF1/SREBP1 and SREBF2/SREBP2. At high sterol concentrations, formation of a ternary complex with INSIG (INSIG1 or INSIG2) leads to mask the ER export signal in SCAP, promoting retention of the complex in the endoplasmic reticulum. Low sterol concentrations trigger release of INSIG, a conformational change in the SSD domain of SCAP, unmasking of the ER export signal, promoting recruitment into COPII-coated vesicles and transport of the SCAP-SREBP to the Golgi: in the Golgi, SREBPs are then processed, releasing the transcription factor fragment of SREBPs from the membrane, its import into the nucleus and up-regulation of LDLR, INSIG1 and the mevalonate pathway. Binds cholesterol via its SSD domain. In Homo sapiens (Human), this protein is Sterol regulatory element-binding protein cleavage-activating protein.